The primary structure comprises 125 residues: Phosphoribosyl-AMP cyclohydrolase (125 aa).

Asp74 lines the Mg(2+) pocket. Zn(2+) is bound at residue Cys75. Residues Asp76 and Asp78 each coordinate Mg(2+). Residues Cys92 and Cys99 each coordinate Zn(2+).

Belongs to the PRA-CH family. In terms of assembly, homodimer. Requires Mg(2+) as cofactor. Zn(2+) is required as a cofactor.

It is found in the cytoplasm. The enzyme catalyses 1-(5-phospho-beta-D-ribosyl)-5'-AMP + H2O = 1-(5-phospho-beta-D-ribosyl)-5-[(5-phospho-beta-D-ribosylamino)methylideneamino]imidazole-4-carboxamide. The protein operates within amino-acid biosynthesis; L-histidine biosynthesis; L-histidine from 5-phospho-alpha-D-ribose 1-diphosphate: step 3/9. Functionally, catalyzes the hydrolysis of the adenine ring of phosphoribosyl-AMP. In Pelobacter propionicus (strain DSM 2379 / NBRC 103807 / OttBd1), this protein is Phosphoribosyl-AMP cyclohydrolase.